A 405-amino-acid polypeptide reads, in one-letter code: 3-isopropylmalate dehydrogenase (405 aa).

G86 to E104 contributes to the NAD(+) binding site. 4 residues coordinate substrate: R111, R121, R148, and D237. Mg(2+)-binding residues include D237, D262, and D266. G301–N312 is an NAD(+) binding site. The interval A352–S371 is disordered.

The protein belongs to the isocitrate and isopropylmalate dehydrogenases family. As to quaternary structure, homodimer. It depends on Mg(2+) as a cofactor. Mn(2+) is required as a cofactor.

The protein resides in the cytoplasm. It catalyses the reaction (2R,3S)-3-isopropylmalate + NAD(+) = 4-methyl-2-oxopentanoate + CO2 + NADH. It participates in amino-acid biosynthesis; L-leucine biosynthesis; L-leucine from 3-methyl-2-oxobutanoate: step 3/4. In terms of biological role, catalyzes the oxidation of 3-carboxy-2-hydroxy-4-methylpentanoate (3-isopropylmalate) to 3-carboxy-4-methyl-2-oxopentanoate. The product decarboxylates to 4-methyl-2 oxopentanoate. This chain is 3-isopropylmalate dehydrogenase (LEU2), found in Yarrowia lipolytica (strain CLIB 122 / E 150) (Yeast).